We begin with the raw amino-acid sequence, 931 residues long: Protocadherin gamma-B2 (931 aa).

The signal sequence occupies residues 1–30 (MKASSGRCGLVRWLQVLLPFLLSLFPGALP). Cadherin domains lie at 31–133 (VQIR…TPLF), 134–242 (KQTK…PPVF), 243–347 (SQDV…APEV), 348–452 (IVTS…APVF), 453–562 (QQTS…APRV), and 570–675 (DGSA…LPDL). Topologically, residues 31–691 (VQIRYSIPEE…SDPQAELQFY (661 aa)) are extracellular. 2 N-linked (GlcNAc...) asparagine glycosylation sites follow: N419 and N545. A helical membrane pass occupies residues 692–712 (LVVALALISVLFFLAVILAIS). Residues 713-931 (LRLRRSSRSD…KKKSGKKEKK (219 aa)) lie on the Cytoplasmic side of the membrane. 2 disordered regions span residues 814–840 (DWRF…WPNN) and 901–931 (ATLT…KEKK). Residues 815–840 (WRFSQAQRPGTSGSQNGDDTGTWPNN) are compositionally biased toward polar residues. Basic residues predominate over residues 921–931 (NKKKSGKKEKK).

It localises to the cell membrane. Functionally, potential calcium-dependent cell-adhesion protein. May be involved in the establishment and maintenance of specific neuronal connections in the brain. The chain is Protocadherin gamma-B2 (PCDHGB2) from Pan troglodytes (Chimpanzee).